The following is a 508-amino-acid chain: MSWLIQNRIGNTLLRLNPSSSSIAIFSTFIKNLSTASEQLPETLDEYSQSEEIWNVIVGRDGDRDSEDDVFKRLSSDEICKRVNLSDGLVHKLLHRFRDDWRSALGILKWAESCKGHKHSSDAYDMAVDILGKAKKWDRMKEFVERMRGDKLVTLNTVAKIMRRFAGAGEWEEAVGIFDRLGEFGLEKNTESMNLLLDTLCKEKRVEQARVVLLQLKSHITPNAHTFNIFIHGWCKANRVEEALWTIQEMKGHGFRPCVISYTTIIRCYCQQFEFIKVYEMLSEMEANGSPPNSITYTTIMSSLNAQKEFEEALRVATRMKRSGCKPDSLFYNCLIHTLARAGRLEEAERVFRVEMPELGVSINTSTYNSMIAMYCHHDEEDKAIELLKEMESSNLCNPDVHTYQPLLRSCFKRGDVVEVGKLLKEMVTKHHLSLDESTYTFLIQRLCRANMCEWAYCLFEEMISQDITPRHRTCLLLLEEVKKKNMHESAERIEHIMKTVKLTAPVK.

Residues 1–74 (MSWLIQNRIG…DSEDDVFKRL (74 aa)) constitute a mitochondrion transit peptide. PPR repeat units lie at residues 120-150 (SSDA…MRGD), 154-188 (TLNT…GLEK), 189-219 (NTES…LKSH), 223-257 (NAHT…GFRP), 258-292 (CVIS…GSPP), 293-327 (NSIT…GCKP), 328-363 (DSLF…GVSI), 364-398 (NTST…NLCN), 400-434 (DVHT…HHLS), and 436-470 (DEST…DITP).

It belongs to the PPR family. P subfamily.

The protein resides in the mitochondrion. The chain is Pentatricopeptide repeat-containing protein At3g04130, mitochondrial from Arabidopsis thaliana (Mouse-ear cress).